Here is a 148-residue protein sequence, read N- to C-terminus: Transcriptional regulator MraZ (148 aa).

SpoVT-AbrB domains follow at residues 5–51 (STQL…PQPV) and 80–123 (ASDV…DMAK).

It belongs to the MraZ family. As to quaternary structure, forms oligomers.

The protein resides in the cytoplasm. The protein localises to the nucleoid. In Nitrosomonas europaea (strain ATCC 19718 / CIP 103999 / KCTC 2705 / NBRC 14298), this protein is Transcriptional regulator MraZ.